A 587-amino-acid polypeptide reads, in one-letter code: Aspartate--tRNA ligase (587 aa).

Glutamate 174 provides a ligand contact to L-aspartate. The tract at residues 198–201 is aspartate; it reads QITK. Arginine 220 is an L-aspartate binding site. ATP contacts are provided by residues 220-222 and glutamine 229; that span reads RDE. Histidine 443 is a binding site for L-aspartate. Glutamate 477 serves as a coordination point for ATP. Residue arginine 484 participates in L-aspartate binding. 529–532 is an ATP binding site; it reads GLDR.

Belongs to the class-II aminoacyl-tRNA synthetase family. Type 1 subfamily. In terms of assembly, homodimer.

The protein localises to the cytoplasm. The catalysed reaction is tRNA(Asp) + L-aspartate + ATP = L-aspartyl-tRNA(Asp) + AMP + diphosphate. In terms of biological role, catalyzes the attachment of L-aspartate to tRNA(Asp) in a two-step reaction: L-aspartate is first activated by ATP to form Asp-AMP and then transferred to the acceptor end of tRNA(Asp). In Streptococcus pneumoniae serotype 19F (strain G54), this protein is Aspartate--tRNA ligase.